Here is a 44-residue protein sequence, read N- to C-terminus: Thymosin beta-4, Y-chromosomal (44 aa).

Residues 1–44 (MSDKPGMAEIEKFDKSKLKKTETQEKNPLSSKETIEQERQAGES) form a disordered region. Composition is skewed to basic and acidic residues over residues 9-25 (EIEK…ETQE) and 33-44 (ETIEQERQAGES).

It belongs to the thymosin beta family. Ubiquitous.

It is found in the cytoplasm. The protein localises to the cytoskeleton. Its function is as follows. Plays an important role in the organization of the cytoskeleton. Binds to and sequesters actin monomers (G actin) and therefore inhibits actin polymerization. The polypeptide is Thymosin beta-4, Y-chromosomal (TMSB4Y) (Homo sapiens (Human)).